Reading from the N-terminus, the 196-residue chain is DnaA initiator-associating protein DiaA (196 aa).

An SIS domain is found at 34–196 (MVQSLLNGNK…DNTLFPHQDD (163 aa)).

Belongs to the SIS family. DiaA subfamily. Homotetramer; dimer of dimers.

In terms of biological role, required for the timely initiation of chromosomal replication via direct interactions with the DnaA initiator protein. The chain is DnaA initiator-associating protein DiaA from Photorhabdus laumondii subsp. laumondii (strain DSM 15139 / CIP 105565 / TT01) (Photorhabdus luminescens subsp. laumondii).